A 274-amino-acid polypeptide reads, in one-letter code: Thymidylate synthase (274 aa).

Arg-21 serves as a coordination point for dUMP. Residue His-51 participates in (6R)-5,10-methylene-5,6,7,8-tetrahydrofolate binding. 123–124 (RR) lines the dUMP pocket. Cys-156 (nucleophile) is an active-site residue. Residues 176 to 179 (RSAD), Asn-187, and 217 to 219 (HIY) each bind dUMP. Asp-179 is a binding site for (6R)-5,10-methylene-5,6,7,8-tetrahydrofolate. Ala-273 serves as a coordination point for (6R)-5,10-methylene-5,6,7,8-tetrahydrofolate.

Belongs to the thymidylate synthase family. Bacterial-type ThyA subfamily. In terms of assembly, homodimer.

It is found in the cytoplasm. The enzyme catalyses dUMP + (6R)-5,10-methylene-5,6,7,8-tetrahydrofolate = 7,8-dihydrofolate + dTMP. Its pathway is pyrimidine metabolism; dTTP biosynthesis. Its function is as follows. Catalyzes the reductive methylation of 2'-deoxyuridine-5'-monophosphate (dUMP) to 2'-deoxythymidine-5'-monophosphate (dTMP) while utilizing 5,10-methylenetetrahydrofolate (mTHF) as the methyl donor and reductant in the reaction, yielding dihydrofolate (DHF) as a by-product. This enzymatic reaction provides an intracellular de novo source of dTMP, an essential precursor for DNA biosynthesis. The protein is Thymidylate synthase of Christiangramia forsetii (strain DSM 17595 / CGMCC 1.15422 / KT0803) (Gramella forsetii).